Consider the following 416-residue polypeptide: D-amino acid dehydrogenase (416 aa).

3–17 (ITILGSGVIGVTTAY) is an FAD binding site.

This sequence belongs to the DadA oxidoreductase family. It depends on FAD as a cofactor.

It carries out the reaction a D-alpha-amino acid + A + H2O = a 2-oxocarboxylate + AH2 + NH4(+). The protein operates within amino-acid degradation; D-alanine degradation; NH(3) and pyruvate from D-alanine: step 1/1. Functionally, oxidative deamination of D-amino acids. In Brucella anthropi (strain ATCC 49188 / DSM 6882 / CCUG 24695 / JCM 21032 / LMG 3331 / NBRC 15819 / NCTC 12168 / Alc 37) (Ochrobactrum anthropi), this protein is D-amino acid dehydrogenase.